The primary structure comprises 293 residues: Ribosomal protein L11 methyltransferase (293 aa).

The S-adenosyl-L-methionine site is built by T145, G166, D188, and N229.

The protein belongs to the methyltransferase superfamily. PrmA family.

The protein resides in the cytoplasm. The enzyme catalyses L-lysyl-[protein] + 3 S-adenosyl-L-methionine = N(6),N(6),N(6)-trimethyl-L-lysyl-[protein] + 3 S-adenosyl-L-homocysteine + 3 H(+). Methylates ribosomal protein L11. This chain is Ribosomal protein L11 methyltransferase, found in Halorhodospira halophila (strain DSM 244 / SL1) (Ectothiorhodospira halophila (strain DSM 244 / SL1)).